Here is an 826-residue protein sequence, read N- to C-terminus: Zinc phosphodiesterase ELAC protein 2 (826 aa).

The N-terminal 16 residues, 1–16 (MWALCSLLRSAAGRTM), are a transit peptide targeting the mitochondrion. 2 disordered regions span residues 16–51 (MSQG…PSGC) and 188–231 (EQRR…VSQR). Positions 27-38 (ARRERPRKDPLR) are enriched in basic and acidic residues. A phosphoserine mark is found at serine 199, serine 208, serine 212, serine 229, serine 618, and serine 736. A compositionally biased stretch (basic and acidic residues) spans 208 to 224 (SPERSSDSESNENEPHL). The tract at residues 798–826 (ELAGGLEDGEPQQKRAHTEEPQAKKVRAQ) is disordered. The segment covering 808–820 (PQQKRAHTEEPQA) has biased composition (basic and acidic residues).

This sequence belongs to the RNase Z family. As to quaternary structure, homodimer. Interacts with PTCD1. Zn(2+) serves as cofactor. In terms of tissue distribution, widely expressed. Highly expressed in heart, placenta, liver, skeletal muscle, kidney, pancreas, testis and ovary. Weakly expressed in brain, lung, spleen, thymus, prostate, small intestine, colon and leukocytes.

The protein localises to the mitochondrion. It localises to the mitochondrion matrix. The protein resides in the mitochondrion nucleoid. Its subcellular location is the nucleus. The catalysed reaction is Endonucleolytic cleavage of RNA, removing extra 3' nucleotides from tRNA precursor, generating 3' termini of tRNAs. A 3'-hydroxy group is left at the tRNA terminus and a 5'-phosphoryl group is left at the trailer molecule.. In terms of biological role, zinc phosphodiesterase, which displays mitochondrial tRNA 3'-processing endonuclease activity. Involved in tRNA maturation, by removing a 3'-trailer from precursor tRNA. Associates with mitochondrial DNA complexes at the nucleoids to initiate RNA processing and ribosome assembly. This is Zinc phosphodiesterase ELAC protein 2 (ELAC2) from Homo sapiens (Human).